A 664-amino-acid chain; its full sequence is E3 ubiquitin-protein ligase CHFR (664 aa).

Residues Met1–Arg21 are disordered. The region spanning Trp38–Val89 is the FHA domain. Positions Phe142–Asp267 are disordered. Low complexity predominate over residues Pro186 to Ala198. Ser244 carries the post-translational modification Phosphoserine. The segment covering Glu254–Gly264 has biased composition (basic and acidic residues). The RING-type zinc finger occupies Cys304–Arg343. Residue Thr386 is modified to Phosphothreonine. Disordered stretches follow at residues Asp388–Glu417 and Ala439–Pro461. Residues Asp400–Glu417 show a composition bias toward acidic residues. A PBZ-type zinc finger spans residues Pro633–His655.

Belongs to the CHFR family. In terms of assembly, interacts with HDAC1 and HDAC2. Interacts with PML (with sumoylated form of PML). Poly-ADP-ribosylated. In addition to binding non covalently poly(ADP-ribose) via its PBZ-type zinc finger, the protein is also covalently poly-ADP-ribosylated by PARP1. In terms of processing, autoubiquitinated; may regulate its cellular level. Post-translationally, phosphorylated by PKB. Phosphorylation may affect its E3 ligase activity. As to expression, ubiquitous.

It is found in the nucleus. The protein localises to the PML body. It carries out the reaction S-ubiquitinyl-[E2 ubiquitin-conjugating enzyme]-L-cysteine + [acceptor protein]-L-lysine = [E2 ubiquitin-conjugating enzyme]-L-cysteine + N(6)-ubiquitinyl-[acceptor protein]-L-lysine.. It functions in the pathway protein modification; protein ubiquitination. E3 ubiquitin-protein ligase that functions in the antephase checkpoint by actively delaying passage into mitosis in response to microtubule poisons. Acts in early prophase before chromosome condensation, when the centrosome move apart from each other along the periphery of the nucleus. Probably involved in signaling the presence of mitotic stress caused by microtubule poisons by mediating the 'Lys-48'-linked ubiquitination of target proteins, leading to their degradation by the proteasome. Promotes the ubiquitination and subsequent degradation of AURKA and PLK1. Probably acts as a tumor suppressor, possibly by mediating the polyubiquitination of HDAC1, leading to its degradation. May also promote the formation of 'Lys-63'-linked polyubiquitin chains and functions with the specific ubiquitin-conjugating UBC13-MMS2 (UBE2N-UBE2V2) heterodimer. Substrates that are polyubiquitinated at 'Lys-63' are usually not targeted for degradation, but are rather involved in signaling cellular stress. This chain is E3 ubiquitin-protein ligase CHFR (CHFR), found in Homo sapiens (Human).